Here is a 486-residue protein sequence, read N- to C-terminus: Aspartyl/glutamyl-tRNA(Asn/Gln) amidotransferase subunit B (486 aa).

It belongs to the GatB/GatE family. GatB subfamily. Heterotrimer of A, B and C subunits.

It catalyses the reaction L-glutamyl-tRNA(Gln) + L-glutamine + ATP + H2O = L-glutaminyl-tRNA(Gln) + L-glutamate + ADP + phosphate + H(+). The enzyme catalyses L-aspartyl-tRNA(Asn) + L-glutamine + ATP + H2O = L-asparaginyl-tRNA(Asn) + L-glutamate + ADP + phosphate + 2 H(+). Its function is as follows. Allows the formation of correctly charged Asn-tRNA(Asn) or Gln-tRNA(Gln) through the transamidation of misacylated Asp-tRNA(Asn) or Glu-tRNA(Gln) in organisms which lack either or both of asparaginyl-tRNA or glutaminyl-tRNA synthetases. The reaction takes place in the presence of glutamine and ATP through an activated phospho-Asp-tRNA(Asn) or phospho-Glu-tRNA(Gln). The sequence is that of Aspartyl/glutamyl-tRNA(Asn/Gln) amidotransferase subunit B from Orientia tsutsugamushi (strain Ikeda) (Rickettsia tsutsugamushi).